We begin with the raw amino-acid sequence, 302 residues long: HTH-type transcriptional regulator AbgR (302 aa).

Residues 5-62 (VKIHQIRAFVEVARQGSIRGASRMLNMSQPALSKSIQELEEGLAAQLFFRRSKGVTLT) enclose the HTH lysR-type domain. The segment at residues 22–41 (IRGASRMLNMSQPALSKSIQ) is a DNA-binding region (H-T-H motif).

It belongs to the LysR transcriptional regulatory family.

In terms of biological role, could be the regulator of the abg operon. The protein is HTH-type transcriptional regulator AbgR (abgR) of Escherichia coli (strain K12).